Reading from the N-terminus, the 340-residue chain is NADH-quinone oxidoreductase subunit H (340 aa).

Helical transmembrane passes span 4–24, 78–98, 113–133, 151–171, 184–204, 244–264, 273–293, and 316–336; these read TIGI…PLLI, YLFV…WAVI, VLYL…AGWA, VSYE…AGSM, MLHW…ISGI, SMIL…LSPF, IFFI…FLFV, and VLIP…VAHV.

Belongs to the complex I subunit 1 family. In terms of assembly, NDH-1 is composed of 14 different subunits. Subunits NuoA, H, J, K, L, M, N constitute the membrane sector of the complex.

It is found in the cell inner membrane. It carries out the reaction a quinone + NADH + 5 H(+)(in) = a quinol + NAD(+) + 4 H(+)(out). NDH-1 shuttles electrons from NADH, via FMN and iron-sulfur (Fe-S) centers, to quinones in the respiratory chain. The immediate electron acceptor for the enzyme in this species is believed to be ubiquinone. Couples the redox reaction to proton translocation (for every two electrons transferred, four hydrogen ions are translocated across the cytoplasmic membrane), and thus conserves the redox energy in a proton gradient. This subunit may bind ubiquinone. This chain is NADH-quinone oxidoreductase subunit H, found in Legionella pneumophila subsp. pneumophila (strain Philadelphia 1 / ATCC 33152 / DSM 7513).